A 168-amino-acid chain; its full sequence is Transcription antitermination protein NusB (168 aa).

It belongs to the NusB family.

Involved in transcription antitermination. Required for transcription of ribosomal RNA (rRNA) genes. Binds specifically to the boxA antiterminator sequence of the ribosomal RNA (rrn) operons. The chain is Transcription antitermination protein NusB from Chlamydia trachomatis serovar A (strain ATCC VR-571B / DSM 19440 / HAR-13).